Consider the following 205-residue polypeptide: High frequency lysogenization protein HflD homolog (205 aa).

Belongs to the HflD family.

The protein resides in the cytoplasm. It is found in the cell inner membrane. In Aliivibrio fischeri (strain ATCC 700601 / ES114) (Vibrio fischeri), this protein is High frequency lysogenization protein HflD homolog.